The sequence spans 336 residues: Probable aquaglyceroporin-2 (336 aa).

Positions 1–46 are disordered; the sequence is MPISTINDSISESSVHKSSIPTKVEMSQNEKYSEAPSEAPTIPPPP. Residues 1 to 64 are Cytoplasmic-facing; the sequence is MPISTINDSI…RENCQDAFSE (64 aa). Residues 9-19 show a composition bias toward low complexity; the sequence is SISESSVHKSS. A helical membrane pass occupies residues 65-85; the sequence is FFGTFVLLLFGDGVVAQVVLS. The Extracellular segment spans residues 86-94; it reads RGTKGDYQS. Residues 95–115 traverse the membrane as a helical segment; sequence ISWGWGLGVMLGVYVGGKSGG. The Cytoplasmic segment spans residues 116-135; it reads HLNPAVTLANCLFRGHPWRK. An NPA 1 motif is present at residues 118–120; sequence NPA. The helical transmembrane segment at 136–156 threads the bilayer; the sequence is FPIYAVAQVLGAMAAAAVVYG. At 157–195 the chain is on the extracellular side; that stretch reads NYKSAIDAYEGGPGIRTVIGENATAGVFCTYPAEFMTRT. A glycan (N-linked (GlcNAc...) asparagine) is linked at Asn-178. Residues 196–216 form a helical membrane-spanning segment; that stretch reads GMFFSEFIASTILQFVIFAMA. Topologically, residues 217-223 are cytoplasmic; it reads DSANIGA. The helical transmembrane segment at 224-244 threads the bilayer; sequence GPLMPLGLFFLIFGIGACFGW. Residues 245–280 lie on the Extracellular side of the membrane; the sequence is ETGYAINLARDFGPRLVSYMLGYGSEVWSAGGYYFW. The NPA 2 motif lies at 251 to 253; sequence NLA. Residues 281–301 form a helical membrane-spanning segment; that stretch reads IPMVAPFFGCAFGGFLYDVFI. The Cytoplasmic portion of the chain corresponds to 302-336; the sequence is YTGPSPINTPGMGFGRLVSPRRSTWSNTYNANSPV.

This sequence belongs to the MIP/aquaporin (TC 1.A.8) family.

The protein localises to the membrane. The enzyme catalyses H2O(in) = H2O(out). It carries out the reaction glycerol(in) = glycerol(out). Its function is as follows. Probable water/glycerol channel that may have redundant functions with FgAQP4. This is Probable aquaglyceroporin-2 from Gibberella zeae (strain ATCC MYA-4620 / CBS 123657 / FGSC 9075 / NRRL 31084 / PH-1) (Wheat head blight fungus).